Here is a 386-residue protein sequence, read N- to C-terminus: 3-hydroxyisobutyryl-CoA hydrolase, mitochondrial (386 aa).

The transit peptide at Met-1 to Thr-32 directs the protein to the mitochondrion. Lys-92 is subject to N6-acetyllysine; alternate. Lys-92 carries the N6-succinyllysine; alternate modification. Substrate is bound by residues Glu-121, Gly-146, Glu-169, and Asp-177. N6-acetyllysine; alternate is present on Lys-221. The residue at position 221 (Lys-221) is an N6-succinyllysine; alternate. At Ser-234 the chain carries Phosphoserine. An N6-succinyllysine mark is found at Lys-250 and Lys-257. Position 297 is an N6-acetyllysine; alternate (Lys-297). Lys-297 is subject to N6-succinyllysine; alternate. Lys-301 is modified (N6-succinyllysine). An N6-acetyllysine; alternate modification is found at Lys-353. At Lys-353 the chain carries N6-succinyllysine; alternate. Ser-356 carries the phosphoserine modification. N6-acetyllysine occurs at positions 360 and 365. At Lys-377 the chain carries N6-succinyllysine.

Belongs to the enoyl-CoA hydratase/isomerase family.

The protein localises to the mitochondrion. It carries out the reaction 3-hydroxy-2-methylpropanoyl-CoA + H2O = 3-hydroxy-2-methylpropanoate + CoA + H(+). The protein operates within amino-acid degradation; L-valine degradation. Functionally, hydrolyzes 3-hydroxyisobutyryl-CoA (HIBYL-CoA), a saline catabolite. Has high activity toward isobutyryl-CoA. Could be an isobutyryl-CoA dehydrogenase that functions in valine catabolism. Also hydrolyzes 3-hydroxypropanoyl-CoA. The chain is 3-hydroxyisobutyryl-CoA hydrolase, mitochondrial (HIBCH) from Bos taurus (Bovine).